The sequence spans 139 residues: D-ribose pyranase (139 aa).

Histidine 20 acts as the Proton donor in catalysis. Substrate contacts are provided by residues aspartate 28, histidine 106, and 128-130 (FAN).

It belongs to the RbsD / FucU family. RbsD subfamily. As to quaternary structure, homodecamer.

Its subcellular location is the cytoplasm. The catalysed reaction is beta-D-ribopyranose = beta-D-ribofuranose. The protein operates within carbohydrate metabolism; D-ribose degradation; D-ribose 5-phosphate from beta-D-ribopyranose: step 1/2. Its function is as follows. Catalyzes the interconversion of beta-pyran and beta-furan forms of D-ribose. The chain is D-ribose pyranase from Yersinia enterocolitica serotype O:8 / biotype 1B (strain NCTC 13174 / 8081).